The chain runs to 631 residues: Phosphomethylpyrimidine synthase (631 aa).

Substrate-binding positions include Asn-239, Met-268, Tyr-297, His-333, 353 to 355 (SRG), 394 to 397 (DGLR), and Glu-433. A Zn(2+)-binding site is contributed by His-437. Tyr-460 is a substrate binding site. Residue His-501 participates in Zn(2+) binding. Cys-581, Cys-584, and Cys-589 together coordinate [4Fe-4S] cluster.

Belongs to the ThiC family. Homodimer. [4Fe-4S] cluster serves as cofactor.

It catalyses the reaction 5-amino-1-(5-phospho-beta-D-ribosyl)imidazole + S-adenosyl-L-methionine = 4-amino-2-methyl-5-(phosphooxymethyl)pyrimidine + CO + 5'-deoxyadenosine + formate + L-methionine + 3 H(+). The protein operates within cofactor biosynthesis; thiamine diphosphate biosynthesis. Its function is as follows. Catalyzes the synthesis of the hydroxymethylpyrimidine phosphate (HMP-P) moiety of thiamine from aminoimidazole ribotide (AIR) in a radical S-adenosyl-L-methionine (SAM)-dependent reaction. The sequence is that of Phosphomethylpyrimidine synthase from Salmonella enteritidis PT4 (strain P125109).